A 178-amino-acid polypeptide reads, in one-letter code: MKEIRGKKLKLLLKEEDIKRRVKELAKEIESSYSWEEPIVVVGLLKGAFIFLADLVRAFDRFVFVEFMQVSSYGKGMKSSGTIKIVKDLDMDIEGKEVLLVDDILDTGLTMKEIHDYLLMKKPKVLKTCVFLDKKERRKVDFNADFVGFEVPDKFLVGYGLDWGEYGRNLPEVYMVED.

Positions 46 and 47 each coordinate diphosphate. Asp103 contributes to the Mg(2+) binding site. The active-site Proton acceptor is the Asp106. Residues Lys134, 155–156 (FL), and Asp162 contribute to the GMP site. Position 168 (Arg168) interacts with diphosphate.

Belongs to the purine/pyrimidine phosphoribosyltransferase family. Mg(2+) serves as cofactor.

Its subcellular location is the cytoplasm. The catalysed reaction is IMP + diphosphate = hypoxanthine + 5-phospho-alpha-D-ribose 1-diphosphate. It catalyses the reaction GMP + diphosphate = guanine + 5-phospho-alpha-D-ribose 1-diphosphate. Its pathway is purine metabolism; IMP biosynthesis via salvage pathway; IMP from hypoxanthine: step 1/1. It functions in the pathway purine metabolism; GMP biosynthesis via salvage pathway; GMP from guanine: step 1/1. In terms of biological role, purine salvage pathway enzyme that catalyzes the transfer of the ribosyl-5-phosphate group from 5-phospho-alpha-D-ribose 1-diphosphate (PRPP) to the N9 position of the 6-oxopurines hypoxanthine and guanine to form the corresponding ribonucleotides IMP (inosine 5'-monophosphate) and GMP (guanosine 5'-monophosphate), with the release of PPi. This chain is Hypoxanthine-guanine phosphoribosyltransferase (hpt), found in Aquifex aeolicus (strain VF5).